Consider the following 582-residue polypeptide: DNA primase (582 aa).

The CHC2-type zinc finger occupies 40–64 (CPFHHEKTPSFTVSQKKQFYHCFGC). One can recognise a Toprim domain in the interval 259-341 (EMLLVVEGYM…GRQLKFVFLP (83 aa)). Positions 265, 309, and 311 each coordinate Mg(2+).

The protein belongs to the DnaG primase family. Monomer. Interacts with DnaB. It depends on Zn(2+) as a cofactor. Requires Mg(2+) as cofactor.

The catalysed reaction is ssDNA + n NTP = ssDNA/pppN(pN)n-1 hybrid + (n-1) diphosphate.. Functionally, RNA polymerase that catalyzes the synthesis of short RNA molecules used as primers for DNA polymerase during DNA replication. The sequence is that of DNA primase from Pasteurella multocida (strain Pm70).